A 565-amino-acid polypeptide reads, in one-letter code: Liver carboxylesterase 1 (565 aa).

An N-terminal signal peptide occupies residues 1-18; the sequence is MWLCALALASLAACTAWG. N-linked (GlcNAc...) asparagine glycosylation is present at Asn79. A disulfide bridge connects residues Cys87 and Cys116. Ser221 serves as the catalytic Acyl-ester intermediate. A disulfide bond links Cys273 and Cys284. Residue Glu353 is the Charge relay system of the active site. N-linked (GlcNAc...) asparagine glycosylation occurs at Asn389. The Charge relay system role is filled by His467. Residue Leu565 is a short sequence motif, prevents secretion from ER.

The protein belongs to the type-B carboxylesterase/lipase family. In terms of assembly, monomer.

It is found in the endoplasmic reticulum lumen. It catalyses the reaction a carboxylic ester + H2O = an alcohol + a carboxylate + H(+). Functionally, involved in the detoxification of xenobiotics and in the activation of ester and amide prodrugs. The protein is Liver carboxylesterase 1 of Oryctolagus cuniculus (Rabbit).